The primary structure comprises 441 residues: Histidinol dehydrogenase (441 aa).

Substrate-binding residues include threonine 240, glutamine 262, and histidine 265. Zn(2+)-binding residues include glutamine 262 and histidine 265. Active-site proton acceptor residues include glutamate 332 and histidine 333. The substrate site is built by histidine 333, aspartate 366, glutamate 420, and histidine 425. Zn(2+) is bound at residue aspartate 366. Histidine 425 is a Zn(2+) binding site.

This sequence belongs to the histidinol dehydrogenase family. The cofactor is Zn(2+).

The catalysed reaction is L-histidinol + 2 NAD(+) + H2O = L-histidine + 2 NADH + 3 H(+). The protein operates within amino-acid biosynthesis; L-histidine biosynthesis; L-histidine from 5-phospho-alpha-D-ribose 1-diphosphate: step 9/9. Catalyzes the sequential NAD-dependent oxidations of L-histidinol to L-histidinaldehyde and then to L-histidine. This chain is Histidinol dehydrogenase, found in Streptomyces avermitilis (strain ATCC 31267 / DSM 46492 / JCM 5070 / NBRC 14893 / NCIMB 12804 / NRRL 8165 / MA-4680).